The chain runs to 218 residues: Thiopurine S-methyltransferase (218 aa).

S-adenosyl-L-methionine-binding residues include tryptophan 10, leucine 45, glutamate 66, and arginine 123.

It belongs to the class I-like SAM-binding methyltransferase superfamily. TPMT family.

It localises to the cytoplasm. The catalysed reaction is S-adenosyl-L-methionine + a thiopurine = S-adenosyl-L-homocysteine + a thiopurine S-methylether.. This is Thiopurine S-methyltransferase from Shewanella putrefaciens (strain CN-32 / ATCC BAA-453).